Here is a 61-residue protein sequence, read N- to C-terminus: Small ribosomal subunit protein uS14 (61 aa).

Cys-24, Cys-27, Cys-40, and Cys-43 together coordinate Zn(2+).

This sequence belongs to the universal ribosomal protein uS14 family. Zinc-binding uS14 subfamily. In terms of assembly, part of the 30S ribosomal subunit. Contacts proteins S3 and S10. It depends on Zn(2+) as a cofactor.

Functionally, binds 16S rRNA, required for the assembly of 30S particles and may also be responsible for determining the conformation of the 16S rRNA at the A site. The polypeptide is Small ribosomal subunit protein uS14 (Clostridium beijerinckii (strain ATCC 51743 / NCIMB 8052) (Clostridium acetobutylicum)).